Here is a 281-residue protein sequence, read N- to C-terminus: Large ribosomal subunit protein uL2 (281 aa).

The segment at 223-281 (VRGSVMNPVDHPHGGGEGKQPVGRKSPLTPWGKIALGVKTRKTKKSSNKLILRRRKDAK) is disordered. Over residues 261–281 (KTRKTKKSSNKLILRRRKDAK) the composition is skewed to basic residues.

Belongs to the universal ribosomal protein uL2 family. Part of the 50S ribosomal subunit. Forms a bridge to the 30S subunit in the 70S ribosome.

In terms of biological role, one of the primary rRNA binding proteins. Required for association of the 30S and 50S subunits to form the 70S ribosome, for tRNA binding and peptide bond formation. It has been suggested to have peptidyltransferase activity; this is somewhat controversial. Makes several contacts with the 16S rRNA in the 70S ribosome. The sequence is that of Large ribosomal subunit protein uL2 from Mycoplasmopsis synoviae (strain 53) (Mycoplasma synoviae).